Here is a 620-residue protein sequence, read N- to C-terminus: UDP-glucose:protein N-beta-glucosyltransferase (620 aa).

It belongs to the glycosyltransferase 41 family.

It is found in the cytoplasm. The catalysed reaction is L-asparaginyl-[protein] + UDP-alpha-D-glucose = N(4)-(beta-D-glucosyl)-L-asparaginyl-[protein] + UDP + H(+). It functions in the pathway protein modification; protein glycosylation. In terms of biological role, inverting glycosyltransferase that catalyzes the transfer of one glucose moiety from UDP-glucose to an asparagine residue in peptides and proteins containing the NX(S/T) motif, resulting in their modification with a beta-linked 1,N-glucose. Likely acts as a key component of a general protein glycosylation system. This Actinobacillus pleuropneumoniae serotype 5b (strain L20) protein is UDP-glucose:protein N-beta-glucosyltransferase.